A 224-amino-acid chain; its full sequence is PKHD-type hydroxylase Shewmr4_3244 (224 aa).

In terms of domain architecture, Fe2OG dioxygenase spans 78–176 (QFYPPLFNRY…RTAAFMWLQS (99 aa)). Fe cation contacts are provided by histidine 96, aspartate 98, and histidine 157. Arginine 167 contacts 2-oxoglutarate.

Fe(2+) is required as a cofactor. It depends on L-ascorbate as a cofactor.

The sequence is that of PKHD-type hydroxylase Shewmr4_3244 from Shewanella sp. (strain MR-4).